The chain runs to 296 residues: tRNA dimethylallyltransferase (296 aa).

ATP is bound at residue 2–9; that stretch reads GPTASGKT. A substrate-binding site is contributed by 4 to 9; the sequence is TASGKT. Interaction with substrate tRNA stretches follow at residues 27–30, 151–155, and 232–237; these read DSAL, QRLAR, and RCVGYR.

Belongs to the IPP transferase family. As to quaternary structure, monomer. Requires Mg(2+) as cofactor.

The enzyme catalyses adenosine(37) in tRNA + dimethylallyl diphosphate = N(6)-dimethylallyladenosine(37) in tRNA + diphosphate. In terms of biological role, catalyzes the transfer of a dimethylallyl group onto the adenine at position 37 in tRNAs that read codons beginning with uridine, leading to the formation of N6-(dimethylallyl)adenosine (i(6)A). This is tRNA dimethylallyltransferase from Shewanella pealeana (strain ATCC 700345 / ANG-SQ1).